We begin with the raw amino-acid sequence, 142 residues long: Protein Turandot X (142 aa).

Residues 1–22 (MGLSIGSLLICVFLGIVPFATA) form the signal peptide.

The protein belongs to the Turandot family.

The protein resides in the secreted. In terms of biological role, a humoral factor that may play a role in stress tolerance. The protein is Protein Turandot X of Drosophila melanogaster (Fruit fly).